Here is a 563-residue protein sequence, read N- to C-terminus: Arginine--tRNA ligase (563 aa).

The 'HIGH' region signature appears at 121-131 (PNIAKPFSIGH).

The protein belongs to the class-I aminoacyl-tRNA synthetase family. In terms of assembly, monomer.

The protein localises to the cytoplasm. The catalysed reaction is tRNA(Arg) + L-arginine + ATP = L-arginyl-tRNA(Arg) + AMP + diphosphate. The sequence is that of Arginine--tRNA ligase from Streptococcus pneumoniae (strain Taiwan19F-14).